Consider the following 101-residue polypeptide: Iron-sulfur cluster assembly protein CyaY (101 aa).

This sequence belongs to the frataxin family.

Its function is as follows. Involved in iron-sulfur (Fe-S) cluster assembly. May act as a regulator of Fe-S biogenesis. The sequence is that of Iron-sulfur cluster assembly protein CyaY from Haemophilus influenzae (strain PittEE).